We begin with the raw amino-acid sequence, 299 residues long: Protease HtpX homolog (299 aa).

The next 2 membrane-spanning stretches (helical) occupy residues 14 to 34 and 39 to 59; these read IVLL…VGYL and LVGG…SMIF. Residue H143 participates in Zn(2+) binding. Residue E144 is part of the active site. Position 147 (H147) interacts with Zn(2+). The next 2 helical transmembrane spans lie at 158–178 and 198–218; these read IAVA…RMMW and IILL…ASLV. Zn(2+) is bound at residue E227.

It belongs to the peptidase M48B family. Zn(2+) serves as cofactor.

The protein resides in the cell membrane. The protein is Protease HtpX homolog of Streptococcus mutans serotype c (strain ATCC 700610 / UA159).